A 254-amino-acid polypeptide reads, in one-letter code: DNA-3-methyladenine glycosylase (254 aa).

Over residues methionine 1–arginine 10 the composition is skewed to basic residues. Residues methionine 1–valine 20 form a disordered region.

This sequence belongs to the DNA glycosylase MPG family.

The protein localises to the nucleus. It carries out the reaction Hydrolysis of alkylated DNA, releasing 3-methyladenine, 3-methylguanine, 7-methylguanine and 7-methyladenine.. Its function is as follows. Hydrolysis of the deoxyribose N-glycosidic bond to excise 3-methyladenine, and 7-methylguanine from the damaged DNA polymer formed by alkylation lesions. The polypeptide is DNA-3-methyladenine glycosylase (MAG) (Arabidopsis thaliana (Mouse-ear cress)).